A 314-amino-acid chain; its full sequence is Hydroxyacyl-coenzyme A dehydrogenase, mitochondrial (314 aa).

Residues 1–12 (MAFVTRQFMRSV) constitute a mitochondrion transit peptide. Residues 34–39 (GGGLMG) and aspartate 57 each bind NAD(+). Positions 73 and 80 each coordinate CoA. At lysine 80 the chain carries N6-succinyllysine. 2 positions are modified to N6-acetyllysine; alternate: lysine 81 and lysine 87. Residues lysine 81 and lysine 87 each carry the N6-succinyllysine; alternate modification. Residue glutamate 122 coordinates NAD(+). Residue lysine 125 is modified to N6-acetyllysine. Lysine 127 lines the NAD(+) pocket. Position 127 is an N6-(2-hydroxyisobutyryl)lysine (lysine 127). Lysine 136 carries the post-translational modification N6-acetyllysine; alternate. Lysine 136 is subject to N6-succinyllysine; alternate. NAD(+)-binding residues include serine 149 and asparagine 173. Serine 149 contacts CoA. Residue lysine 179 is modified to N6-acetyllysine. N6-acetyllysine; alternate occurs at positions 185, 192, and 202. N6-succinyllysine; alternate occurs at positions 185, 192, and 202. Lysine 206 is modified (N6-succinyllysine). N6-acetyllysine; alternate is present on residues lysine 212 and lysine 241. N6-succinyllysine; alternate occurs at positions 212 and 241. Lysine 305 lines the NAD(+) pocket. Lysine 312 is modified (N6-acetyllysine; alternate). Lysine 312 is subject to N6-succinyllysine; alternate.

It belongs to the 3-hydroxyacyl-CoA dehydrogenase family. In terms of assembly, homodimer. Interacts with GLUD1; this interaction inhibits the activation of glutamate dehydrogenase 1 (GLUD1). Succinylation at Lys-81, adjacent to a coenzyme A binding site. Desuccinylated by SIRT5. As to expression, expressed in liver, kidney, pancreas, heart and skeletal muscle.

The protein resides in the mitochondrion matrix. The catalysed reaction is a (3S)-3-hydroxyacyl-CoA + NAD(+) = a 3-oxoacyl-CoA + NADH + H(+). It catalyses the reaction (3S)-3-hydroxybutanoyl-CoA + NAD(+) = acetoacetyl-CoA + NADH + H(+). It carries out the reaction (3S)-hydroxydecanoyl-CoA + NAD(+) = 3-oxodecanoyl-CoA + NADH + H(+). The enzyme catalyses (3S)-hydroxyhexadecanoyl-CoA + NAD(+) = 3-oxohexadecanoyl-CoA + NADH + H(+). It participates in lipid metabolism; fatty acid beta-oxidation. Its function is as follows. Mitochondrial fatty acid beta-oxidation enzyme that catalyzes the third step of the beta-oxidation cycle for medium and short-chain 3-hydroxy fatty acyl-CoAs (C4 to C10). Plays a role in the control of insulin secretion by inhibiting the activation of glutamate dehydrogenase 1 (GLUD1), an enzyme that has an important role in regulating amino acid-induced insulin secretion. Plays a role in the maintenance of normal spermatogenesis through the reduction of fatty acid accumulation in the testes. This is Hydroxyacyl-coenzyme A dehydrogenase, mitochondrial (HADH) from Homo sapiens (Human).